The sequence spans 104 residues: NADH-quinone oxidoreductase subunit K (104 aa).

Transmembrane regions (helical) follow at residues 4 to 24 (VAYY…AFLI), 28 to 48 (IITI…SFVA), and 64 to 84 (IFVF…LAII).

The protein belongs to the complex I subunit 4L family. As to quaternary structure, NDH-1 is composed of 14 different subunits. Subunits NuoA, H, J, K, L, M, N constitute the membrane sector of the complex.

It is found in the cell inner membrane. The enzyme catalyses a quinone + NADH + 5 H(+)(in) = a quinol + NAD(+) + 4 H(+)(out). NDH-1 shuttles electrons from NADH, via FMN and iron-sulfur (Fe-S) centers, to quinones in the respiratory chain. The immediate electron acceptor for the enzyme in this species is believed to be ubiquinone. Couples the redox reaction to proton translocation (for every two electrons transferred, four hydrogen ions are translocated across the cytoplasmic membrane), and thus conserves the redox energy in a proton gradient. The polypeptide is NADH-quinone oxidoreductase subunit K (Acidobacterium capsulatum (strain ATCC 51196 / DSM 11244 / BCRC 80197 / JCM 7670 / NBRC 15755 / NCIMB 13165 / 161)).